A 348-amino-acid polypeptide reads, in one-letter code: Methylthioribose-1-phosphate isomerase (348 aa).

Substrate-binding positions include 46-48, arginine 88, and glutamine 194; that span reads RGA. Aspartate 235 serves as the catalytic Proton donor. 245–246 contributes to the substrate binding site; that stretch reads NK.

The protein belongs to the eIF-2B alpha/beta/delta subunits family. MtnA subfamily.

It carries out the reaction 5-(methylsulfanyl)-alpha-D-ribose 1-phosphate = 5-(methylsulfanyl)-D-ribulose 1-phosphate. It participates in amino-acid biosynthesis; L-methionine biosynthesis via salvage pathway; L-methionine from S-methyl-5-thio-alpha-D-ribose 1-phosphate: step 1/6. Functionally, catalyzes the interconversion of methylthioribose-1-phosphate (MTR-1-P) into methylthioribulose-1-phosphate (MTRu-1-P). The polypeptide is Methylthioribose-1-phosphate isomerase (Desulforudis audaxviator (strain MP104C)).